Here is a 122-residue protein sequence, read N- to C-terminus: Large ribosomal subunit protein bL12 (122 aa).

This sequence belongs to the bacterial ribosomal protein bL12 family. In terms of assembly, homodimer. Part of the ribosomal stalk of the 50S ribosomal subunit. Forms a multimeric L10(L12)X complex, where L10 forms an elongated spine to which 2 to 4 L12 dimers bind in a sequential fashion. Binds GTP-bound translation factors.

Functionally, forms part of the ribosomal stalk which helps the ribosome interact with GTP-bound translation factors. Is thus essential for accurate translation. This chain is Large ribosomal subunit protein bL12, found in Staphylococcus aureus (strain Mu50 / ATCC 700699).